Reading from the N-terminus, the 134-residue chain is Small ribosomal subunit protein uS11 (134 aa).

The protein belongs to the universal ribosomal protein uS11 family. As to quaternary structure, part of the 30S ribosomal subunit. Interacts with proteins S7 and S18. Binds to IF-3.

Functionally, located on the platform of the 30S subunit, it bridges several disparate RNA helices of the 16S rRNA. Forms part of the Shine-Dalgarno cleft in the 70S ribosome. This chain is Small ribosomal subunit protein uS11, found in Paraburkholderia xenovorans (strain LB400).